We begin with the raw amino-acid sequence, 142 residues long: Hemoglobin subunit alpha-1 (142 aa).

The Globin domain occupies 2-142; that stretch reads LLSADDKKHI…VSSVLTSKYR (141 aa). His59 is an O2 binding site. A heme b-binding site is contributed by His88.

It belongs to the globin family. In terms of assembly, heterotetramer of two alpha chains and two beta chains. As to expression, red blood cells.

Involved in oxygen transport from the lung to the various peripheral tissues. The sequence is that of Hemoglobin subunit alpha-1 (hba1) from Xenopus borealis (Kenyan clawed frog).